The following is a 229-amino-acid chain: MDQDDPAEALTELREKRLGLLEIVQAAAGSGLAVYTIWALLLQPGFRRVPLRLQVPYVGASARQVENVLSLLRGRPGKMVDLGSGDGRIVLAAHQCGLRPAMGYELNPWLVGLARLHAWRAGCSASVCYHRKDLWKVSLRDCHNVSVFLAPSVLQLLEDKLQAELPVGARVVSGRFPLPTWQPVAVVGEGTDRVWAYDVHGSGPTVSSCGVPIKAIPESSSTLVPRAPV.

Positions 1–22 (MDQDDPAEALTELREKRLGLLE) are N-terminal sequence (NTS). Residues 20–42 (LLEIVQAAAGSGLAVYTIWALLL) form a helical membrane-spanning segment. Positions 43–77 (QPGFRRVPLRLQVPYVGASARQVENVLSLLRGRPG) are methyltransferase (MTase). The pre-methyltransferase (preMT) stretch occupies residues 43–77 (QPGFRRVPLRLQVPYVGASARQVENVLSLLRGRPG).

Belongs to the ANT/ATPSC lysine N-methyltransferase family.

It localises to the mitochondrion membrane. It catalyses the reaction L-lysyl-[protein] + 3 S-adenosyl-L-methionine = N(6),N(6),N(6)-trimethyl-L-lysyl-[protein] + 3 S-adenosyl-L-homocysteine + 3 H(+). Its function is as follows. Mitochondrial protein-lysine N-methyltransferase that trimethylates adenine nucleotide translocases ANT2/SLC25A5 and ANT3/SLC25A6, thereby regulating mitochondrial respiration. Probably also trimethylates ANT1/SLC25A4. The polypeptide is Adenine nucleotide translocase lysine N-methyltransferase (Mus musculus (Mouse)).